The primary structure comprises 224 residues: ATP-dependent dethiobiotin synthetase BioD (224 aa).

Mg(2+) is bound at residue T18. K39 is an active-site residue. S43 contacts substrate. Positions 56 and 117 each coordinate Mg(2+). ATP is bound by residues D56, 117 to 120 (EGVG), and 177 to 178 (NE).

It belongs to the dethiobiotin synthetase family. In terms of assembly, homodimer. It depends on Mg(2+) as a cofactor.

It localises to the cytoplasm. It catalyses the reaction (7R,8S)-7,8-diammoniononanoate + CO2 + ATP = (4R,5S)-dethiobiotin + ADP + phosphate + 3 H(+). Its pathway is cofactor biosynthesis; biotin biosynthesis; biotin from 7,8-diaminononanoate: step 1/2. In terms of biological role, catalyzes a mechanistically unusual reaction, the ATP-dependent insertion of CO2 between the N7 and N8 nitrogen atoms of 7,8-diaminopelargonic acid (DAPA, also called 7,8-diammoniononanoate) to form a ureido ring. The sequence is that of ATP-dependent dethiobiotin synthetase BioD from Xanthomonas oryzae pv. oryzae (strain MAFF 311018).